Here is a 338-residue protein sequence, read N- to C-terminus: Glycerol-3-phosphate dehydrogenase [NAD(P)+] 1 (338 aa).

S11, W12, H32, R33, and K109 together coordinate NADPH. The sn-glycerol 3-phosphate site is built by K109, G140, and S142. Residue A144 coordinates NADPH. The sn-glycerol 3-phosphate site is built by K195, D248, S258, R259, and N260. K195 serves as the catalytic Proton acceptor. R259 contributes to the NADPH binding site. NADPH-binding residues include V283 and E285.

It belongs to the NAD-dependent glycerol-3-phosphate dehydrogenase family.

The protein resides in the cytoplasm. The catalysed reaction is sn-glycerol 3-phosphate + NAD(+) = dihydroxyacetone phosphate + NADH + H(+). It carries out the reaction sn-glycerol 3-phosphate + NADP(+) = dihydroxyacetone phosphate + NADPH + H(+). It functions in the pathway membrane lipid metabolism; glycerophospholipid metabolism. Functionally, catalyzes the reduction of the glycolytic intermediate dihydroxyacetone phosphate (DHAP) to sn-glycerol 3-phosphate (G3P), the key precursor for phospholipid synthesis. This Lactobacillus delbrueckii subsp. bulgaricus (strain ATCC 11842 / DSM 20081 / BCRC 10696 / JCM 1002 / NBRC 13953 / NCIMB 11778 / NCTC 12712 / WDCM 00102 / Lb 14) protein is Glycerol-3-phosphate dehydrogenase [NAD(P)+] 1.